Consider the following 121-residue polypeptide: Large ribosomal subunit protein uL18 (121 aa).

The protein belongs to the universal ribosomal protein uL18 family. As to quaternary structure, part of the 50S ribosomal subunit; part of the 5S rRNA/L5/L18/L25 subcomplex. Contacts the 5S and 23S rRNAs.

Its function is as follows. This is one of the proteins that bind and probably mediate the attachment of the 5S RNA into the large ribosomal subunit, where it forms part of the central protuberance. The sequence is that of Large ribosomal subunit protein uL18 from Ureaplasma parvum serovar 3 (strain ATCC 27815 / 27 / NCTC 11736).